The primary structure comprises 374 residues: Alpha-galactosylglucosyldiacylglycerol synthase (374 aa).

This sequence belongs to the glycosyltransferase group 1 family. Glycosyltransferase 4 subfamily. The cofactor is Mg(2+).

The protein localises to the cell membrane. It catalyses the reaction a 1,2-diacyl-3-O-(alpha-D-glucopyranosyl)-sn-glycerol + UDP-alpha-D-galactose = a 1,2-diacyl-3-O-[alpha-D-galactopyranosyl-(1-&gt;2)-alpha-D-glucopyranosyl]-sn-glycerol + UDP + H(+). With respect to regulation, activated by the negatively charged lipid phosphatidylglycerol (PG). In terms of biological role, galactosyltransferase involved in the biosynthesis of the bilayer-forming membrane lipid alpha-galactosyl-glucosyldiacylglycerol which is involved in maintaining constant nonbilayer/bilayer conditions (curvature packing stress). Also involved in the beta-lactam resistance. Catalyzes the transfer of a galactosyl residue from UDP-Gal to alpha-glucosyl-DAG (1,2-diacyl-3-O-(alpha-D-glucopyranosyl)-sn-glycerol) acceptor to form the corresponding galactosyl-glycosyl-DAG product (3-O-alpha-(D-galactopyranosyl-alpha-(1-&gt;2)-D-glucopyranosyl)-1,2-diacyl-sn-glycerol). It can only use UDP-Gal as sugar donor and alpha-glucosyl-DAG is the preferred sugar acceptor. The polypeptide is Alpha-galactosylglucosyldiacylglycerol synthase (cpoA) (Streptococcus pneumoniae (strain ATCC BAA-255 / R6)).